The following is a 430-amino-acid chain: Enolase (430 aa).

Glutamine 163 provides a ligand contact to (2R)-2-phosphoglycerate. Catalysis depends on glutamate 205, which acts as the Proton donor. Mg(2+) contacts are provided by aspartate 242, glutamate 285, and aspartate 312. (2R)-2-phosphoglycerate-binding residues include lysine 337, arginine 366, serine 367, and lysine 388. Lysine 337 acts as the Proton acceptor in catalysis.

The protein belongs to the enolase family. It depends on Mg(2+) as a cofactor.

The protein resides in the cytoplasm. It localises to the secreted. Its subcellular location is the cell surface. The catalysed reaction is (2R)-2-phosphoglycerate = phosphoenolpyruvate + H2O. The protein operates within carbohydrate degradation; glycolysis; pyruvate from D-glyceraldehyde 3-phosphate: step 4/5. Its function is as follows. Catalyzes the reversible conversion of 2-phosphoglycerate (2-PG) into phosphoenolpyruvate (PEP). It is essential for the degradation of carbohydrates via glycolysis. The polypeptide is Enolase (Rhodopseudomonas palustris (strain BisB18)).